The chain runs to 435 residues: Enolase (435 aa).

Gln163 contributes to the (2R)-2-phosphoglycerate binding site. Glu205 (proton donor) is an active-site residue. Mg(2+) is bound by residues Asp243, Glu292, and Asp319. (2R)-2-phosphoglycerate contacts are provided by Lys344, Arg373, Ser374, and Lys395. The active-site Proton acceptor is the Lys344.

This sequence belongs to the enolase family. The cofactor is Mg(2+).

Its subcellular location is the cytoplasm. It localises to the secreted. The protein resides in the cell surface. It carries out the reaction (2R)-2-phosphoglycerate = phosphoenolpyruvate + H2O. The protein operates within carbohydrate degradation; glycolysis; pyruvate from D-glyceraldehyde 3-phosphate: step 4/5. Its function is as follows. Catalyzes the reversible conversion of 2-phosphoglycerate (2-PG) into phosphoenolpyruvate (PEP). It is essential for the degradation of carbohydrates via glycolysis. In Streptococcus pyogenes serotype M12 (strain MGAS2096), this protein is Enolase.